The primary structure comprises 555 residues: CTP synthase (555 aa).

Positions 1–265 are amidoligase domain; the sequence is MTRYIFITGG…GNRVCEKLNI (265 aa). Residue Ser-13 participates in CTP binding. Ser-13 is a UTP binding site. Residues 14-19 and Asp-71 contribute to the ATP site; that span reads SLGKGI. Mg(2+) contacts are provided by Asp-71 and Glu-139. CTP-binding positions include 146 to 148, 186 to 191, and Lys-222; these read DIE and KTKPTQ. Residues 186-191 and Lys-222 contribute to the UTP site; that span reads KTKPTQ. One can recognise a Glutamine amidotransferase type-1 domain in the interval 290 to 541; that stretch reads TVAVVGKYVD…IKAGLAAKEA (252 aa). Position 351 (Gly-351) interacts with L-glutamine. Cys-378 serves as the catalytic Nucleophile; for glutamine hydrolysis. L-glutamine-binding positions include 379-382, Glu-402, and Arg-469; that span reads LGMQ. Active-site residues include His-514 and Glu-516.

It belongs to the CTP synthase family. In terms of assembly, homotetramer.

The catalysed reaction is UTP + L-glutamine + ATP + H2O = CTP + L-glutamate + ADP + phosphate + 2 H(+). It catalyses the reaction L-glutamine + H2O = L-glutamate + NH4(+). It carries out the reaction UTP + NH4(+) + ATP = CTP + ADP + phosphate + 2 H(+). It functions in the pathway pyrimidine metabolism; CTP biosynthesis via de novo pathway; CTP from UDP: step 2/2. With respect to regulation, allosterically activated by GTP, when glutamine is the substrate; GTP has no effect on the reaction when ammonia is the substrate. The allosteric effector GTP functions by stabilizing the protein conformation that binds the tetrahedral intermediate(s) formed during glutamine hydrolysis. Inhibited by the product CTP, via allosteric rather than competitive inhibition. Catalyzes the ATP-dependent amination of UTP to CTP with either L-glutamine or ammonia as the source of nitrogen. Regulates intracellular CTP levels through interactions with the four ribonucleotide triphosphates. This Coxiella burnetii (strain Dugway 5J108-111) protein is CTP synthase.